The sequence spans 262 residues: Lysosomal-associated transmembrane protein 5 (262 aa).

A run of 5 helical transmembrane segments spans residues 19–39, 64–84, 92–112, 134–154, and 184–204; these read IATT…FIEH, ISSF…LIGV, LLPF…TLLG, FPLM…LCSS, and FIKM…FKVY. Position 259 is a phosphotyrosine (Tyr-259).

Belongs to the LAPTM4/LAPTM5 transporter family. Binds to ubiquitin.

It is found in the lysosome membrane. Functionally, may have a special functional role during embryogenesis and in adult hematopoietic cells. The polypeptide is Lysosomal-associated transmembrane protein 5 (LAPTM5) (Pongo abelii (Sumatran orangutan)).